The sequence spans 289 residues: Probable 2-keto-3-deoxyxylonate dehydratase (289 aa).

Mg(2+)-binding residues include E144, E146, and D164.

Belongs to the FAH family.

It carries out the reaction 2-dehydro-3-deoxy-D-arabinonate = 2,5-dioxopentanoate + H2O. The protein operates within carbohydrate metabolism; D-xylose degradation. Functionally, probable 2-keto-3-deoxyxylonate dehydratase involved in the degradation of D-xylose, a major component of hemicelluloses such as xylan. Catalyzes the fourth reaction in the xylose utilization pathway through dehydratation of 2-dehydro-3-deoxy-D-xylonate into alpha-ketoglutarate semialdehyde (2,5-dioxopentanoate). This chain is Probable 2-keto-3-deoxyxylonate dehydratase, found in Haloferax volcanii (strain ATCC 29605 / DSM 3757 / JCM 8879 / NBRC 14742 / NCIMB 2012 / VKM B-1768 / DS2) (Halobacterium volcanii).